A 697-amino-acid chain; its full sequence is Elongation factor G (697 aa).

In terms of domain architecture, tr-type G spans 10 to 285; the sequence is EKTRNIGIVA…GVNDYLPSPL (276 aa). GTP contacts are provided by residues 19-26, 83-87, and 137-140; these read AHIDAGKT, DTPGH, and NKMD.

Belongs to the TRAFAC class translation factor GTPase superfamily. Classic translation factor GTPase family. EF-G/EF-2 subfamily.

Its subcellular location is the cytoplasm. Catalyzes the GTP-dependent ribosomal translocation step during translation elongation. During this step, the ribosome changes from the pre-translocational (PRE) to the post-translocational (POST) state as the newly formed A-site-bound peptidyl-tRNA and P-site-bound deacylated tRNA move to the P and E sites, respectively. Catalyzes the coordinated movement of the two tRNA molecules, the mRNA and conformational changes in the ribosome. This Ligilactobacillus salivarius (strain UCC118) (Lactobacillus salivarius) protein is Elongation factor G.